A 208-amino-acid polypeptide reads, in one-letter code: Large ribosomal subunit protein uL3 (208 aa).

At Q149 the chain carries N5-methylglutamine.

It belongs to the universal ribosomal protein uL3 family. As to quaternary structure, part of the 50S ribosomal subunit. Forms a cluster with proteins L14 and L19. Post-translationally, methylated by PrmB.

One of the primary rRNA binding proteins, it binds directly near the 3'-end of the 23S rRNA, where it nucleates assembly of the 50S subunit. This chain is Large ribosomal subunit protein uL3, found in Haemophilus influenzae (strain 86-028NP).